The following is a 421-amino-acid chain: UPF0300 protein C737.04 (421 aa).

The protein belongs to the UPF0300 family.

The protein resides in the cytoplasm. The protein is UPF0300 protein C737.04 of Schizosaccharomyces pombe (strain 972 / ATCC 24843) (Fission yeast).